A 431-amino-acid polypeptide reads, in one-letter code: Adenylosuccinate synthetase (431 aa).

GTP-binding positions include 12 to 18 and 40 to 42; these read GDEGKGK and GHT. The active-site Proton acceptor is the Asp-13. The Mg(2+) site is built by Asp-13 and Gly-40. IMP is bound by residues 13 to 16, 38 to 41, Thr-130, Arg-144, Gln-225, Thr-240, and Arg-304; these read DEGK and NAGH. The active-site Proton donor is the His-41. 300–306 contributes to the substrate binding site; it reads ATTGRPR. GTP-binding positions include Arg-306, 332–334, and 414–416; these read KLD and SVG.

The protein belongs to the adenylosuccinate synthetase family. In terms of assembly, homodimer. It depends on Mg(2+) as a cofactor.

Its subcellular location is the cytoplasm. It catalyses the reaction IMP + L-aspartate + GTP = N(6)-(1,2-dicarboxyethyl)-AMP + GDP + phosphate + 2 H(+). It participates in purine metabolism; AMP biosynthesis via de novo pathway; AMP from IMP: step 1/2. Plays an important role in the de novo pathway of purine nucleotide biosynthesis. Catalyzes the first committed step in the biosynthesis of AMP from IMP. The protein is Adenylosuccinate synthetase of Anaeromyxobacter sp. (strain Fw109-5).